Here is a 412-residue protein sequence, read N- to C-terminus: MKAQLLTIGDELLIGQTTNTNAAWLGGRLSRLGVRMTRTVTVGDAREAIFRELDRAYEEARLVICTGGLGPTHDDLTRTVIADYFGAPLQTDPDVLERVRQYYDRRNRDVPPSAPALAQRPEGFETLDNPVGAAVGLWHEAPDGRLIVLLPGIPEEMTAIFEASVQPRLEEQSGVGEVRHRTLVTAGIGETALQEKLGDLSDVLGDDVSLAYLPSTSGVRLRLSADARQTTAGARLDTVEAAIRERAGDDIIGTGDVTLEAVLGDALRARDATIASAESATGGLIGHRLTGVSGSSDYYLGSVVAYANSAKKTVLGVDEAAIREHGAVSEAVAVQMAEGVREALGTTVGVSTTGIAGPTGGTPDKPVGTVWVGYADASERHARRHQFVEDRTLNKELFASAALEEARRTLSV.

It belongs to the CinA family.

In Salinibacter ruber (strain DSM 13855 / M31), this protein is CinA-like protein.